We begin with the raw amino-acid sequence, 359 residues long: Peptide chain release factor 1 (359 aa).

Glutamine 236 carries the N5-methylglutamine modification.

It belongs to the prokaryotic/mitochondrial release factor family. In terms of processing, methylated by PrmC. Methylation increases the termination efficiency of RF1.

It is found in the cytoplasm. In terms of biological role, peptide chain release factor 1 directs the termination of translation in response to the peptide chain termination codons UAG and UAA. This Mycoplasma pneumoniae (strain ATCC 29342 / M129 / Subtype 1) (Mycoplasmoides pneumoniae) protein is Peptide chain release factor 1 (prfA).